The following is a 1600-amino-acid chain: A disintegrin and metalloproteinase with thrombospondin motifs 12 (1600 aa).

Positions 1 to 25 (MPCARGSWLAKLSIVAQLINFGAFC) are cleaved as a signal peptide. Positions 26–244 (HGRQTQPWPV…TLRSRSLSRR (219 aa)) are excised as a propeptide. N105 carries an N-linked (GlcNAc...) asparagine glycan. Positions 210–217 (PICGLKDS) match the Cysteine switch motif. C212 is a Zn(2+) binding site. The Peptidase M12B domain maps to 250–460 (RWVETLVVAD…GRGFCLDDIP (211 aa)). Cystine bridges form between C326–C380, C355–C362, C374–C455, C413–C439, C482–C505, C493–C511, C500–C530, C524–C535, C558–C595, C562–C600, and C573–C585. Position 396 (H396) interacts with Zn(2+). Residue E397 is part of the active site. 2 residues coordinate Zn(2+): H400 and H406. The Disintegrin domain maps to 469–548 (VIAPGVIYDV…GKKPESIPGG (80 aa)). TSP type-1 domains are found at residues 546 to 601 (PGGW…HPCR), 827 to 887 (KLLY…KDCP), 891 to 947 (WAGE…RDIL), and 948 to 1001 (CPSD…QQCP). The tract at residues 705-831 (CQTVKKLFRQ…DNDVEKLLYF (127 aa)) is spacer 1. The tract at residues 1001–1321 (PFSRRVLKPN…HLMKDHSPAY (321 aa)) is spacer 2. 2 disordered regions span residues 1006–1140 (VLKP…LSSS) and 1158–1179 (PEVE…KDKS). The span at 1038-1047 (PTPLSTPTVP) shows a compositional bias: low complexity. Polar residues predominate over residues 1048–1107 (ESMSTSTPTINSLGSTIASQEDANGMGWQNNSTQAEEGSHFPTSSGSTSQVPVTSWSLSI). A compositionally biased stretch (low complexity) spans 1130–1140 (TTTSDSGLSSS). TSP type-1 domains follow at residues 1318–1371 (SPAY…RPCA), 1373–1428 (WRVG…CNLE), 1429–1477 (PCGE…NRHL), and 1478–1538 (CCHW…QACR). The region spanning 1541-1581 (ADLTCLKDRLSISFCQTLKSMRKCSVPSVRAQCCLSCPQAP) is the PLAC domain.

As to quaternary structure, interacts with COMP. Requires Zn(2+) as cofactor. The precursor is cleaved by a furin endopeptidase. In terms of processing, subjected to an intracellular maturation process yielding a 120 kDa N-terminal fragment containing the metalloproteinase, disintegrin, one TSP type-1 and the Cys-rich domains and a 83 kDa C-terminal fragment containing the spacer 2 and four TSP type-1 domains. Post-translationally, glycosylated. Can be O-fucosylated by POFUT2 on a serine or a threonine residue found within the consensus sequence C1-X(2)-(S/T)-C2-G of the TSP type-1 repeat domains where C1 and C2 are the first and second cysteine residue of the repeat, respectively. Fucosylated repeats can then be further glycosylated by the addition of a beta-1,3-glucose residue by the glucosyltransferase, B3GALTL. Fucosylation mediates the efficient secretion of ADAMTS family members. Can also be C-glycosylated with one or two mannose molecules on tryptophan residues within the consensus sequence W-X-X-W of the TPRs, and N-glycosylated. These other glycosylations can also facilitate secretion.

It localises to the secreted. Its subcellular location is the extracellular space. The protein resides in the extracellular matrix. Inhibited by alpha-2 macroglobulin. Functionally, metalloprotease that plays a role in the degradation of COMP. Also cleaves alpha-2 macroglobulin and aggregan. Has anti-tumorigenic properties. The sequence is that of A disintegrin and metalloproteinase with thrombospondin motifs 12 (Adamts12) from Mus musculus (Mouse).